Here is a 220-residue protein sequence, read N- to C-terminus: Claudin-22 (220 aa).

At 1 to 10 the chain is on the cytoplasmic side; the sequence is MALVFRTVAQ. Residues 11-30 form a helical membrane-spanning segment; that stretch reads LAGVSLSLLGWVLSCLTNYL. At 31–81 the chain is on the extracellular side; the sequence is PHWKNLNLDLNEMENWTMGLWQTCVIQEEVGMQCKDFDSFLALPAELRVSR. A helical transmembrane segment spans residues 82–102; that stretch reads ILMFLSNGLGFLGLLVSGFGL. At 103–117 the chain is on the cytoplasmic side; that stretch reads DCLRIGESQRDLKRR. The helical transmembrane segment at 118 to 138 threads the bilayer; the sequence is LLILGGILSWASGVTALVPVS. Residues 139–164 lie on the Extracellular side of the membrane; it reads WVAHKTVQEFWDENVPDFVPRWEFGE. The chain crosses the membrane as a helical span at residues 165–185; it reads ALFLGWFAGLSLLLGGCLLHC. The Cytoplasmic segment spans residues 186-220; that stretch reads AACSSHAPLASGHYAVAQTQDHHQELETRNTNLKH.

Belongs to the claudin family.

Its subcellular location is the cell junction. It localises to the tight junction. It is found in the cell membrane. In terms of biological role, plays a major role in tight junction-specific obliteration of the intercellular space, through calcium-independent cell-adhesion activity. This is Claudin-22 (CLDN22) from Homo sapiens (Human).